The sequence spans 349 residues: ALA-interacting subunit 3 (349 aa).

Positions 1 to 21 are enriched in low complexity; sequence MSSNTASSSAGAAGSGDSSAA. Residues 1–30 form a disordered region; the sequence is MSSNTASSSAGAAGSGDSSAARKNSKRPKY. An N-acetylserine modification is found at Ser2. The helical transmembrane segment at 50 to 70 threads the bilayer; the sequence is VISTFLIVSVIFIPLGVISLF. N-linked (GlcNAc...) asparagine glycans are attached at residues Asn181, Asn190, and Asn223. Residues 305–325 form a helical membrane-spanning segment; sequence LGIAYLTVGGICFILALAFTI.

The protein belongs to the CDC50/LEM3 family. In terms of assembly, interacts with ALA2 and ALA3 in a heterologous system. Expressed in roots, leaves, stems, flowers and siliques.

The protein resides in the golgi apparatus membrane. Its subcellular location is the prevacuolar compartment membrane. The protein localises to the endoplasmic reticulum membrane. Required for the lipid transport activity of the ALA/ALIS P4-ATPase complex. This chain is ALA-interacting subunit 3 (ALIS3), found in Arabidopsis thaliana (Mouse-ear cress).